A 218-amino-acid polypeptide reads, in one-letter code: Cytochrome c biogenesis ATP-binding export protein CcmA (218 aa).

The region spanning Leu12 to Val217 is the ABC transporter domain. Gly44 to Ser51 is an ATP binding site.

The protein belongs to the ABC transporter superfamily. CcmA exporter (TC 3.A.1.107) family. The complex is composed of two ATP-binding proteins (CcmA) and two transmembrane proteins (CcmB).

The protein localises to the cell inner membrane. It carries out the reaction heme b(in) + ATP + H2O = heme b(out) + ADP + phosphate + H(+). Part of the ABC transporter complex CcmAB involved in the biogenesis of c-type cytochromes; once thought to export heme, this seems not to be the case, but its exact role is uncertain. Responsible for energy coupling to the transport system. The sequence is that of Cytochrome c biogenesis ATP-binding export protein CcmA from Idiomarina loihiensis (strain ATCC BAA-735 / DSM 15497 / L2-TR).